Consider the following 342-residue polypeptide: Phosphate acyltransferase (342 aa).

It belongs to the PlsX family. As to quaternary structure, homodimer. Probably interacts with PlsY.

Its subcellular location is the cytoplasm. The catalysed reaction is a fatty acyl-[ACP] + phosphate = an acyl phosphate + holo-[ACP]. It participates in lipid metabolism; phospholipid metabolism. Functionally, catalyzes the reversible formation of acyl-phosphate (acyl-PO(4)) from acyl-[acyl-carrier-protein] (acyl-ACP). This enzyme utilizes acyl-ACP as fatty acyl donor, but not acyl-CoA. This Pelotomaculum thermopropionicum (strain DSM 13744 / JCM 10971 / SI) protein is Phosphate acyltransferase.